Consider the following 223-residue polypeptide: Bone marrow proteoglycan (223 aa).

An N-terminal signal peptide occupies residues 1-16; that stretch reads MKFPLLLALLVGGASA. The propeptide at 17–106 is acidic; it reads LHLSSETSDS…TSLMGDSGCK (90 aa). The tract at residues 20–81 is disordered; it reads SSETSDSKSP…PGDEGAVSGQ (62 aa). The O-linked (GalNAc...) threonine; partial glycan is linked to Thr-23. Ser-24 carries an O-linked (GalNAc...) serine glycan. Ser-66 is a glycosylation site (O-linked (Xyl...) (chondroitin sulfate) serine). Residues 124 to 223 enclose the C-type lectin domain; the sequence is SVCRRCYRGT…VKRRPFICSY (100 aa). Cystine bridges form between Cys-126–Cys-221 and Cys-198–Cys-213.

Post-translationally, nitrated.

Its subcellular location is the secreted. Cytotoxin and helminthotoxin. MBP also induces non-cytolytic histamine release from basophils. It is involved in antiparasitic defense mechanisms and immune hypersensitivity reactions. In Mus musculus (Mouse), this protein is Bone marrow proteoglycan (Prg2).